The primary structure comprises 58 residues: Small ribosomal subunit protein uS14 (58 aa).

Residues M1–H21 form a disordered region. Over residues T9 to H21 the composition is skewed to basic and acidic residues. The Zn(2+) site is built by C23, C26, C41, and C44.

It belongs to the universal ribosomal protein uS14 family. Zinc-binding uS14 subfamily. Part of the 30S ribosomal subunit. Zn(2+) serves as cofactor.

In terms of biological role, binds 16S rRNA, required for the assembly of 30S particles. The polypeptide is Small ribosomal subunit protein uS14 (Haloquadratum walsbyi (strain DSM 16790 / HBSQ001)).